The following is a 252-amino-acid chain: 3-dehydroquinate dehydratase (252 aa).

Residues Ser21, 46–48 (EWR), and Arg82 each bind 3-dehydroquinate. His143 serves as the catalytic Proton donor/acceptor. Lys170 acts as the Schiff-base intermediate with substrate in catalysis. The 3-dehydroquinate site is built by Arg213, Ser232, and Gln236.

This sequence belongs to the type-I 3-dehydroquinase family. As to quaternary structure, homodimer.

It carries out the reaction 3-dehydroquinate = 3-dehydroshikimate + H2O. It participates in metabolic intermediate biosynthesis; chorismate biosynthesis; chorismate from D-erythrose 4-phosphate and phosphoenolpyruvate: step 3/7. Inhibited by (2R)-2-methyl-3-dehydroquinic acid. Functionally, involved in the third step of the chorismate pathway, which leads to the biosynthesis of aromatic amino acids. Catalyzes the cis-dehydration of 3-dehydroquinate (DHQ) and introduces the first double bond of the aromatic ring to yield 3-dehydroshikimate. The reaction involves the formation of an imine intermediate between the keto group of 3-dehydroquinate and the epsilon-amino group of a Lys-170 at the active site. This chain is 3-dehydroquinate dehydratase, found in Salmonella typhimurium (strain LT2 / SGSC1412 / ATCC 700720).